The primary structure comprises 371 residues: tRNA (guanine(26)-N(2))-dimethyltransferase (371 aa).

The Trm1 methyltransferase domain occupies 4–368 (VEVTEGRTRF…APLPVLEKVV (365 aa)). 5 residues coordinate S-adenosyl-L-methionine: R41, R66, D82, D108, and A109. C237, C240, C256, and C259 together coordinate Zn(2+).

It belongs to the class I-like SAM-binding methyltransferase superfamily. Trm1 family.

The enzyme catalyses guanosine(26) in tRNA + 2 S-adenosyl-L-methionine = N(2)-dimethylguanosine(26) in tRNA + 2 S-adenosyl-L-homocysteine + 2 H(+). In terms of biological role, dimethylates a single guanine residue at position 26 of a number of tRNAs using S-adenosyl-L-methionine as donor of the methyl groups. The chain is tRNA (guanine(26)-N(2))-dimethyltransferase from Methanoculleus marisnigri (strain ATCC 35101 / DSM 1498 / JR1).